The primary structure comprises 186 residues: Acetyltransferase PA2578 (186 aa).

One can recognise an N-acetyltransferase domain in the interval 12–176 (LQLVPFQLGH…NVVLMGLLRQ (165 aa)). CoA contacts are provided by residues Q37, 97 to 99 (IVL), G105, N137, and 142 to 144 (HLY).

Homodimer.

Functionally, catalyzes the transfer of an acetyl group from acetyl coenzyme A (AcCoA) to an acceptor substrate and releases both CoA and the acetylated product. It prefers the antibiotic chloramphenicol. The sequence is that of Acetyltransferase PA2578 from Pseudomonas aeruginosa (strain ATCC 15692 / DSM 22644 / CIP 104116 / JCM 14847 / LMG 12228 / 1C / PRS 101 / PAO1).